The sequence spans 185 residues: Peptidyl-tRNA hydrolase (185 aa).

Tyr14 lines the tRNA pocket. His19 acts as the Proton acceptor in catalysis. Positions 65, 67, and 113 each coordinate tRNA.

Belongs to the PTH family. In terms of assembly, monomer.

It is found in the cytoplasm. It catalyses the reaction an N-acyl-L-alpha-aminoacyl-tRNA + H2O = an N-acyl-L-amino acid + a tRNA + H(+). Functionally, hydrolyzes ribosome-free peptidyl-tRNAs (with 1 or more amino acids incorporated), which drop off the ribosome during protein synthesis, or as a result of ribosome stalling. In terms of biological role, catalyzes the release of premature peptidyl moieties from peptidyl-tRNA molecules trapped in stalled 50S ribosomal subunits, and thus maintains levels of free tRNAs and 50S ribosomes. This is Peptidyl-tRNA hydrolase from Rickettsia felis (strain ATCC VR-1525 / URRWXCal2) (Rickettsia azadi).